Here is a 713-residue protein sequence, read N- to C-terminus: Glycine--tRNA ligase beta subunit (713 aa).

Belongs to the class-II aminoacyl-tRNA synthetase family. Tetramer of two alpha and two beta subunits.

The protein resides in the cytoplasm. The catalysed reaction is tRNA(Gly) + glycine + ATP = glycyl-tRNA(Gly) + AMP + diphosphate. This Leptothrix cholodnii (strain ATCC 51168 / LMG 8142 / SP-6) (Leptothrix discophora (strain SP-6)) protein is Glycine--tRNA ligase beta subunit.